Reading from the N-terminus, the 479-residue chain is Xylose isomerase (479 aa).

The active site involves histidine 144. Mn(2+) is bound by residues glutamate 275, glutamate 311, histidine 314, aspartate 339, aspartate 350, aspartate 352, and tyrosine 382.

This sequence belongs to the xylose isomerase family. As to quaternary structure, homodimer. It depends on Mn(2+) as a cofactor.

The enzyme catalyses alpha-D-xylose = alpha-D-xylulofuranose. The sequence is that of Xylose isomerase (XYLA) from Hordeum vulgare (Barley).